The sequence spans 90 residues: Small ribosomal subunit protein bS18 (90 aa).

Belongs to the bacterial ribosomal protein bS18 family. Part of the 30S ribosomal subunit. Forms a tight heterodimer with protein bS6.

Binds as a heterodimer with protein bS6 to the central domain of the 16S rRNA, where it helps stabilize the platform of the 30S subunit. This chain is Small ribosomal subunit protein bS18, found in Polynucleobacter asymbioticus (strain DSM 18221 / CIP 109841 / QLW-P1DMWA-1) (Polynucleobacter necessarius subsp. asymbioticus).